Reading from the N-terminus, the 59-residue chain is Protein translocase subunit SecE (59 aa).

Residues 30-50 traverse the membrane as a helical segment; it reads ITVITTVIFFAIFFALIDSGI.

The protein belongs to the SecE/SEC61-gamma family. In terms of assembly, component of the Sec protein translocase complex. Heterotrimer consisting of SecY, SecE and SecG subunits. The heterotrimers can form oligomers, although 1 heterotrimer is thought to be able to translocate proteins. Interacts with the ribosome. Interacts with SecDF, and other proteins may be involved. Interacts with SecA.

The protein localises to the cell membrane. Its function is as follows. Essential subunit of the Sec protein translocation channel SecYEG. Clamps together the 2 halves of SecY. May contact the channel plug during translocation. The chain is Protein translocase subunit SecE from Bacillus licheniformis.